The primary structure comprises 360 residues: GDSL esterase/lipase At2g31550 (360 aa).

A signal peptide spans 1-27 (MSTSKAITLTLFITTTLLASCDAAANA). A glycan (N-linked (GlcNAc...) asparagine) is linked at N26. The Nucleophile role is filled by S42. Residues N104 and N326 are each glycosylated (N-linked (GlcNAc...) asparagine). Residues D334 and H337 contribute to the active site.

The protein belongs to the 'GDSL' lipolytic enzyme family.

It is found in the secreted. In Arabidopsis thaliana (Mouse-ear cress), this protein is GDSL esterase/lipase At2g31550.